The primary structure comprises 233 residues: Uridylate kinase (233 aa).

9–10 (GS) is an ATP binding site. G43 contacts UMP. Residues G44 and R48 each coordinate ATP. UMP contacts are provided by residues D65 and 113–119 (VTPGQTT). The ATP site is built by T139, Y145, and D148.

This sequence belongs to the UMP kinase family. As to quaternary structure, homohexamer.

The protein resides in the cytoplasm. It catalyses the reaction UMP + ATP = UDP + ADP. The protein operates within pyrimidine metabolism; CTP biosynthesis via de novo pathway; UDP from UMP (UMPK route): step 1/1. Inhibited by UTP. Its function is as follows. Catalyzes the reversible phosphorylation of UMP to UDP. This Methanosarcina barkeri (strain Fusaro / DSM 804) protein is Uridylate kinase.